Consider the following 460-residue polypeptide: DNA repair protein RAD57 (460 aa).

Residue 125 to 132 (GESSTGKS) participates in ATP binding.

The protein belongs to the RecA family.

The protein localises to the nucleus. Its function is as follows. Participates in the repair of X-ray-induced damage to DNA and in meiosis. It may act in part by stabilizing a repair complex of other RAD genes. The polypeptide is DNA repair protein RAD57 (RAD57) (Saccharomyces cerevisiae (strain ATCC 204508 / S288c) (Baker's yeast)).